A 426-amino-acid chain; its full sequence is Serine--tRNA ligase (426 aa).

Residues 36 to 66 (KRRHLQERTQDLQSQRNTISKEIGQKKAKGE) form a disordered region. Residues 46-55 (DLQSQRNTIS) are compositionally biased toward polar residues. 233–235 (TAE) is a binding site for L-serine. Residue 264 to 266 (RSE) participates in ATP binding. Glu-287 is an L-serine binding site. Residue 351 to 354 (EISS) coordinates ATP. Ser-387 is an L-serine binding site.

The protein belongs to the class-II aminoacyl-tRNA synthetase family. Type-1 seryl-tRNA synthetase subfamily. In terms of assembly, homodimer. The tRNA molecule binds across the dimer.

Its subcellular location is the cytoplasm. The catalysed reaction is tRNA(Ser) + L-serine + ATP = L-seryl-tRNA(Ser) + AMP + diphosphate + H(+). It catalyses the reaction tRNA(Sec) + L-serine + ATP = L-seryl-tRNA(Sec) + AMP + diphosphate + H(+). It participates in aminoacyl-tRNA biosynthesis; selenocysteinyl-tRNA(Sec) biosynthesis; L-seryl-tRNA(Sec) from L-serine and tRNA(Sec): step 1/1. Catalyzes the attachment of serine to tRNA(Ser). Is also able to aminoacylate tRNA(Sec) with serine, to form the misacylated tRNA L-seryl-tRNA(Sec), which will be further converted into selenocysteinyl-tRNA(Sec). This is Serine--tRNA ligase from Francisella tularensis subsp. novicida (strain U112).